Here is a 235-residue protein sequence, read N- to C-terminus: Phosphoribosylaminoimidazole-succinocarboxamide synthase (235 aa).

Belongs to the SAICAR synthetase family.

The enzyme catalyses 5-amino-1-(5-phospho-D-ribosyl)imidazole-4-carboxylate + L-aspartate + ATP = (2S)-2-[5-amino-1-(5-phospho-beta-D-ribosyl)imidazole-4-carboxamido]succinate + ADP + phosphate + 2 H(+). The protein operates within purine metabolism; IMP biosynthesis via de novo pathway; 5-amino-1-(5-phospho-D-ribosyl)imidazole-4-carboxamide from 5-amino-1-(5-phospho-D-ribosyl)imidazole-4-carboxylate: step 1/2. The sequence is that of Phosphoribosylaminoimidazole-succinocarboxamide synthase from Lachnoclostridium phytofermentans (strain ATCC 700394 / DSM 18823 / ISDg) (Clostridium phytofermentans).